A 578-amino-acid polypeptide reads, in one-letter code: Proline--tRNA ligase (578 aa).

The protein belongs to the class-II aminoacyl-tRNA synthetase family. ProS type 1 subfamily. As to quaternary structure, homodimer.

Its subcellular location is the cytoplasm. It catalyses the reaction tRNA(Pro) + L-proline + ATP = L-prolyl-tRNA(Pro) + AMP + diphosphate. Its function is as follows. Catalyzes the attachment of proline to tRNA(Pro) in a two-step reaction: proline is first activated by ATP to form Pro-AMP and then transferred to the acceptor end of tRNA(Pro). As ProRS can inadvertently accommodate and process non-cognate amino acids such as alanine and cysteine, to avoid such errors it has two additional distinct editing activities against alanine. One activity is designated as 'pretransfer' editing and involves the tRNA(Pro)-independent hydrolysis of activated Ala-AMP. The other activity is designated 'posttransfer' editing and involves deacylation of mischarged Ala-tRNA(Pro). The misacylated Cys-tRNA(Pro) is not edited by ProRS. In Burkholderia lata (strain ATCC 17760 / DSM 23089 / LMG 22485 / NCIMB 9086 / R18194 / 383), this protein is Proline--tRNA ligase.